A 775-amino-acid chain; its full sequence is Dipeptidyl peptidase 4 (775 aa).

The N-terminal stretch at 1–15 (MKLLSLLMLAGIAQA) is a signal peptide. N-linked (GlcNAc...) asparagine glycosylation is found at Asn-81, Asn-111, Asn-154, and Asn-219. Residues Ser-613, Asp-690, and His-725 each act as charge relay system in the active site.

Belongs to the peptidase S9B family.

The protein localises to the secreted. It carries out the reaction Release of an N-terminal dipeptide, Xaa-Yaa-|-Zaa-, from a polypeptide, preferentially when Yaa is Pro, provided Zaa is neither Pro nor hydroxyproline.. In terms of biological role, extracellular dipeptidyl-peptidase which removes N-terminal dipeptides sequentially from polypeptides having unsubstituted N-termini provided that the penultimate residue is proline. Contributes to pathogenicity. This Trichophyton rubrum (Athlete's foot fungus) protein is Dipeptidyl peptidase 4 (DPP4).